Here is a 241-residue protein sequence, read N- to C-terminus: Lipopolysaccharide export system ATP-binding protein LptB (241 aa).

In terms of domain architecture, ABC transporter spans Leu-4 to Glu-237. Residue Gly-36–Thr-43 participates in ATP binding.

It belongs to the ABC transporter superfamily. Outer membrane lipopolysaccharide export (TC 1.B.42) family. In terms of assembly, component of the lipopolysaccharide transport and assembly complex. The LptBFG transporter is composed of two ATP-binding proteins (LptB) and two transmembrane proteins (LptF and LptG).

It localises to the cytoplasm. It is found in the cell inner membrane. Part of the ABC transporter complex LptBFG involved in the translocation of lipopolysaccharide (LPS) from the inner membrane to the outer membrane. Probably responsible for energy coupling to the transport system. The protein is Lipopolysaccharide export system ATP-binding protein LptB (lptB) of Escherichia coli O157:H7.